Consider the following 308-residue polypeptide: Aspartate carbamoyltransferase catalytic subunit (308 aa).

Positions 57 and 58 each coordinate carbamoyl phosphate. K86 contributes to the L-aspartate binding site. The carbamoyl phosphate site is built by R107, H135, and Q138. L-aspartate contacts are provided by R168 and R229. Residues L268 and P269 each coordinate carbamoyl phosphate.

Belongs to the aspartate/ornithine carbamoyltransferase superfamily. ATCase family. Heterooligomer of catalytic and regulatory chains.

The catalysed reaction is carbamoyl phosphate + L-aspartate = N-carbamoyl-L-aspartate + phosphate + H(+). It participates in pyrimidine metabolism; UMP biosynthesis via de novo pathway; (S)-dihydroorotate from bicarbonate: step 2/3. In terms of biological role, catalyzes the condensation of carbamoyl phosphate and aspartate to form carbamoyl aspartate and inorganic phosphate, the committed step in the de novo pyrimidine nucleotide biosynthesis pathway. The polypeptide is Aspartate carbamoyltransferase catalytic subunit (Pyrococcus furiosus (strain ATCC 43587 / DSM 3638 / JCM 8422 / Vc1)).